We begin with the raw amino-acid sequence, 505 residues long: Kinesin light chain 3 (505 aa).

A disordered region spans residues 1–20; that stretch reads MSVQVAAPGGLGLGLERPSP. Residues 88 to 150 adopt a coiled-coil conformation; the sequence is LLALSAHVGA…EEEKSHLEFL (63 aa). A disordered region spans residues 157–193; sequence DPPAESQQPESPPRRDSLASLFPSEEEERRGPEAVGA. The residue at position 173 (Ser173) is a Phosphoserine. 5 TPR repeats span residues 207 to 240, 249 to 282, 291 to 324, 333 to 366, and 375 to 408; these read LRTL…LERS, ATML…REQT, AATL…REKV, AKQL…YEAL, and AKTK…EALP. The interval 409 to 505 is disordered; that stretch reads APLGAPNTGT…STSTQDLGPR (97 aa). Low complexity predominate over residues 416-434; it reads TGTTSDTQQQTLSRSSSFS. The span at 435–453 shows a compositional bias: basic and acidic residues; it reads KLRESIRRGSEKLVSRLRG. Ser467 is modified (phosphoserine). Residues 489 to 505 are compositionally biased toward polar residues; that stretch reads SEASRTLSTSTQDLGPR. Thr499 is subject to Phosphothreonine.

The protein belongs to the kinesin light chain family. Oligomer composed of two heavy chains and two light chains. Associates with microtubulin in an ATP-dependent manner. Interacts with KIF5C. Interacts with ODF1. Interacts with LRGUK. Interacts with VDAC2.

The protein resides in the cytoplasm. It localises to the cytoskeleton. The protein localises to the mitochondrion. Its function is as follows. Kinesin is a microtubule-associated force-producing protein that may play a role in organelle transport. Plays a role during spermiogenesis in the development of the sperm tail midpiece and in the normal function of spermatozoa. May play a role in the formation of the mitochondrial sheath formation in the developing spermatid midpiece. The sequence is that of Kinesin light chain 3 (KLC3) from Bos taurus (Bovine).